The chain runs to 84 residues: Exodeoxyribonuclease 7 small subunit (84 aa).

This sequence belongs to the XseB family. As to quaternary structure, heterooligomer composed of large and small subunits.

Its subcellular location is the cytoplasm. The catalysed reaction is Exonucleolytic cleavage in either 5'- to 3'- or 3'- to 5'-direction to yield nucleoside 5'-phosphates.. In terms of biological role, bidirectionally degrades single-stranded DNA into large acid-insoluble oligonucleotides, which are then degraded further into small acid-soluble oligonucleotides. In Yersinia enterocolitica serotype O:8 / biotype 1B (strain NCTC 13174 / 8081), this protein is Exodeoxyribonuclease 7 small subunit.